The sequence spans 416 residues: Serine/threonine-protein kinase 26 (416 aa).

The residue at position 2 (Ala-2) is an N-acetylalanine. Ser-4 is subject to Phosphoserine. One can recognise a Protein kinase domain in the interval 24 to 274 (FTKLERIGKG…AKELLKHKFI (251 aa)). ATP-binding positions include 30–38 (IGKGSFGEV) and Lys-53. The Proton acceptor role is filled by Asp-144. Thr-178 is modified (phosphothreonine; by autocatalysis). The disordered stretch occupies residues 297–340 (EGHSDDESDSEGSDSESTSRENNTHPEWSFTTVRKKPDPKKVQN). Phosphoserine is present on residues Ser-300, Ser-304, Ser-306, Ser-309, and Ser-325. Residues Thr-327 and Thr-328 each carry the phosphothreonine modification.

This sequence belongs to the protein kinase superfamily. STE Ser/Thr protein kinase family. STE20 subfamily. Homodimer. Interacts with PDCD10. Interacts with GOLGA2. Interacts with CTTNBP2NL. Interacts with RIPOR1 (via C-terminus); this interaction occurs in a PDCD10-dependent and Rho-independent manner. Interacts with PDCD10; this interaction is required for the association of STK26 with RIPOR1. Part of the core of STRIPAK complexes composed of PP2A catalytic and scaffolding subunits, the striatins (PP2A regulatory subunits), the striatin-associated proteins MOB4, STRIP1 and STRIP2, PDCD10 and members of the STE20 kinases, such as STK24 and STK26. Mg(2+) serves as cofactor.

It is found in the cytoplasm. Its subcellular location is the golgi apparatus. It carries out the reaction L-seryl-[protein] + ATP = O-phospho-L-seryl-[protein] + ADP + H(+). The catalysed reaction is L-threonyl-[protein] + ATP = O-phospho-L-threonyl-[protein] + ADP + H(+). Its activity is regulated as follows. Interaction with Golgi matrix protein GOLGA2 leads to autophosphorylation on Thr-178, possibly as a consequence of stabilization of dimer formation. May also be activated by C-terminal cleavage. Serine/threonine-protein kinase that acts as a mediator of cell growth. Modulates apoptosis. In association with STK24 negatively regulates Golgi reorientation in polarized cell migration upon RHO activation. Phosphorylates ATG4B at 'Ser-383', thereby increasing autophagic flux. Part of the striatin-interacting phosphatase and kinase (STRIPAK) complexes. STRIPAK complexes have critical roles in protein (de)phosphorylation and are regulators of multiple signaling pathways including Hippo, MAPK, nuclear receptor and cytoskeleton remodeling. Different types of STRIPAK complexes are involved in a variety of biological processes such as cell growth, differentiation, apoptosis, metabolism and immune regulation. The protein is Serine/threonine-protein kinase 26 of Homo sapiens (Human).